The primary structure comprises 183 residues: Large ribosomal subunit protein eL18 (183 aa).

Residues 150–183 (RHFGPAPGAPRSHTKPYVRTKGHERARPRRRSNV) form a disordered region. Residues 161–183 (SHTKPYVRTKGHERARPRRRSNV) are compositionally biased toward basic residues.

It belongs to the eukaryotic ribosomal protein eL18 family.

It is found in the cytoplasm. The sequence is that of Large ribosomal subunit protein eL18 (RpL18) from Spodoptera frugiperda (Fall armyworm).